A 296-amino-acid polypeptide reads, in one-letter code: MKTKIINLVVVTGMSGAGKTVAIQSFEDIGYFTIDNIPPSLVPKVIELLKHSEETDKIALVVDMRSRVFFDEINDILDQLESNEELNFKILFLDATDGELVSRYKETRRSHPLAADGRVLDGIKLERELLSPLKSLSQNVVDTTKLTPRQLRKAISEQFSSKQDQSSFRIEVLSFGFKYGLPLDADLVFDVRFLPNPYYDPTLRNLTGLDKEVYDFVMTHKESEDFYKNLNHLIKPILPGYQKEGKSVLTIAVGCTGGQHRSVAFAHRLAQDLKNDWTVNETHRDKDRRKETVNRS.

Gly13–Thr20 serves as a coordination point for ATP. Residue Asp63–Ser66 participates in GTP binding.

It belongs to the RapZ-like family.

Displays ATPase and GTPase activities. The protein is Nucleotide-binding protein stu0831 of Streptococcus thermophilus (strain ATCC BAA-250 / LMG 18311).